Reading from the N-terminus, the 468-residue chain is Pituitary adenylate cyclase-activating polypeptide type I receptor (468 aa).

The signal sequence occupies residues methionine 1–alanine 20. Over methionine 21–serine 152 the chain is Extracellular. 3 disulfide bridges follow: cysteine 34–cysteine 63, cysteine 54–cysteine 118, and cysteine 77–cysteine 134. Asparagine 48, asparagine 60, and asparagine 117 each carry an N-linked (GlcNAc...) asparagine glycan. Residues glutamate 125 to tyrosine 139 are important for ADCYAP1/PACAP ligand binding and specificity. A helical membrane pass occupies residues valine 153–arginine 177. Over phenylalanine 178–phenylalanine 187 the chain is Cytoplasmic. A helical transmembrane segment spans residues isoleucine 188 to tryptophan 208. The Extracellular segment spans residues isoleucine 209 to threonine 223. Residues valine 224–leucine 249 form a helical membrane-spanning segment. Cysteine 226 and cysteine 296 form a disulfide bridge. The Cytoplasmic segment spans residues tyrosine 250–tyrosine 267. A helical membrane pass occupies residues tryptophan 268 to tyrosine 290. Residues phenylalanine 291–serine 302 are Extracellular-facing. The N-linked (GlcNAc...) asparagine glycan is linked to asparagine 300. A helical transmembrane segment spans residues threonine 303–valine 329. Residues isoleucine 330 to isoleucine 347 are Cytoplasmic-facing. The chain crosses the membrane as a helical span at residues tyrosine 348–glutamate 374. A glycan (N-linked (GlcNAc...) asparagine) is linked at asparagine 375. Residues asparagine 375–arginine 379 lie on the Extracellular side of the membrane. The chain crosses the membrane as a helical span at residues glutamate 380–leucine 403. At asparagine 404–threonine 468 the chain is on the cytoplasmic side. Phosphoserine occurs at positions 434 and 447.

This sequence belongs to the G-protein coupled receptor 2 family. As to quaternary structure, interacts with maxadilan, a vasodilator peptide from Lutzomyia longipalpis saliva; the interaction results in ADCYAP1R1 activation. As to expression, most abundant in the brain, low expression in the lung, liver, thymus, spleen, pancreas and placenta.

The protein localises to the cell membrane. Its activity is regulated as follows. Several synthetic peptides derived from maxadilan, a vasodilator peptide from Lutzomyia longipalpis saliva, act as antagonists for ADCYAP1R1. Its function is as follows. G protein-coupled receptor activated by the neuropeptide pituitary adenylate cyclase-activating polypeptide (ADCYAP1/PACAP). Binds both PACAP27 and PACAP38 bioactive peptides. Ligand binding causes a conformation change that triggers signaling via guanine nucleotide-binding proteins (G proteins) and modulates the activity of downstream effectors. Activates cAMP-dependent pathway. May regulate the release of adrenocorticotropin, luteinizing hormone, growth hormone, prolactin, epinephrine, and catecholamine. May play a role in spermatogenesis and sperm motility. Causes smooth muscle relaxation and secretion in the gastrointestinal tract. The protein is Pituitary adenylate cyclase-activating polypeptide type I receptor of Homo sapiens (Human).